Here is a 315-residue protein sequence, read N- to C-terminus: Lipoyl synthase (315 aa).

Residues 1-33 (MADMPPVLRHPEKAHRPDQPQPKKPDWIRVKAP) are disordered. Residues 9 to 29 (RHPEKAHRPDQPQPKKPDWIR) show a composition bias toward basic and acidic residues. Residues C54, C59, C65, C80, C84, C87, and S294 each contribute to the [4Fe-4S] cluster site. Residues 66-283 (WSQGHATMMI…EKAAYGKGFL (218 aa)) enclose the Radical SAM core domain.

It belongs to the radical SAM superfamily. Lipoyl synthase family. The cofactor is [4Fe-4S] cluster.

Its subcellular location is the cytoplasm. It catalyses the reaction [[Fe-S] cluster scaffold protein carrying a second [4Fe-4S](2+) cluster] + N(6)-octanoyl-L-lysyl-[protein] + 2 oxidized [2Fe-2S]-[ferredoxin] + 2 S-adenosyl-L-methionine + 4 H(+) = [[Fe-S] cluster scaffold protein] + N(6)-[(R)-dihydrolipoyl]-L-lysyl-[protein] + 4 Fe(3+) + 2 hydrogen sulfide + 2 5'-deoxyadenosine + 2 L-methionine + 2 reduced [2Fe-2S]-[ferredoxin]. It functions in the pathway protein modification; protein lipoylation via endogenous pathway; protein N(6)-(lipoyl)lysine from octanoyl-[acyl-carrier-protein]: step 2/2. Its function is as follows. Catalyzes the radical-mediated insertion of two sulfur atoms into the C-6 and C-8 positions of the octanoyl moiety bound to the lipoyl domains of lipoate-dependent enzymes, thereby converting the octanoylated domains into lipoylated derivatives. This is Lipoyl synthase from Paracoccus denitrificans (strain Pd 1222).